A 497-amino-acid chain; its full sequence is Alkane hydroxylase MAH1 (497 aa).

The helical transmembrane segment at 3 to 23 threads the bilayer; sequence MLGFYVTFIFFLVCLFTYFFL. C444 provides a ligand contact to heme.

It belongs to the cytochrome P450 family. Heme is required as a cofactor. As to expression, expressed in the expanding regions of the inflorescence stems, specifically to the epidermal pavement cells, petioles and siliques.

The protein resides in the endoplasmic reticulum membrane. Involved in the formation of secondary alcohols and ketones in stem cuticular wax. Catalyzes the hydroxylation of a methylene unit in the middle of alkane molecules to form secondary alcohols and possibly also a second hydroxylation leading to the corresponding ketones. In Arabidopsis thaliana (Mouse-ear cress), this protein is Alkane hydroxylase MAH1.